The chain runs to 116 residues: Large ribosomal subunit protein bL19 (116 aa).

This sequence belongs to the bacterial ribosomal protein bL19 family.

This protein is located at the 30S-50S ribosomal subunit interface and may play a role in the structure and function of the aminoacyl-tRNA binding site. The sequence is that of Large ribosomal subunit protein bL19 from Syntrophomonas wolfei subsp. wolfei (strain DSM 2245B / Goettingen).